Here is an 83-residue protein sequence, read N- to C-terminus: RNA-binding protein Hfq (83 aa).

In terms of domain architecture, Sm spans 10 to 69; that stretch reads DPFLNALRREHVPVSIYLVNGIKLQGQIESFDQYVVLLRNTVTQMVYKHAISTIVPGRAV.

It belongs to the Hfq family. Homohexamer.

In terms of biological role, RNA chaperone that binds small regulatory RNA (sRNAs) and mRNAs to facilitate mRNA translational regulation in response to envelope stress, environmental stress and changes in metabolite concentrations. Also binds with high specificity to tRNAs. The sequence is that of RNA-binding protein Hfq from Acidovorax ebreus (strain TPSY) (Diaphorobacter sp. (strain TPSY)).